We begin with the raw amino-acid sequence, 901 residues long: Protein translocase subunit SecA 1 (901 aa).

Residues Q87, 105-109, and D500 contribute to the ATP site; that span reads GEGKT. Residues 847–901 form a disordered region; it reads LNHPESGSWGGEGEGPSSEGAPHLPFKRDGEKVGRNQACPCGSGKKYKQCCGKLS. Residues C885, C887, C896, and C897 each coordinate Zn(2+).

It belongs to the SecA family. As to quaternary structure, monomer and homodimer. Part of the essential Sec protein translocation apparatus which comprises SecA, SecYEG and auxiliary proteins SecDF-YajC and YidC. It depends on Zn(2+) as a cofactor.

It localises to the cell inner membrane. The protein localises to the cytoplasm. It carries out the reaction ATP + H2O + cellular proteinSide 1 = ADP + phosphate + cellular proteinSide 2.. Part of the Sec protein translocase complex. Interacts with the SecYEG preprotein conducting channel. Has a central role in coupling the hydrolysis of ATP to the transfer of proteins into and across the cell membrane, serving both as a receptor for the preprotein-SecB complex and as an ATP-driven molecular motor driving the stepwise translocation of polypeptide chains across the membrane. The sequence is that of Protein translocase subunit SecA 1 from Magnetococcus marinus (strain ATCC BAA-1437 / JCM 17883 / MC-1).